The primary structure comprises 326 residues: Beta-ketoacyl-[acyl-carrier-protein] synthase III (326 aa).

Active-site residues include Cys-112 and His-251. The tract at residues 252-256 is ACP-binding; that stretch reads QANSR. Asn-281 is a catalytic residue.

This sequence belongs to the thiolase-like superfamily. FabH family. As to quaternary structure, homodimer.

It localises to the cytoplasm. The catalysed reaction is malonyl-[ACP] + acetyl-CoA + H(+) = 3-oxobutanoyl-[ACP] + CO2 + CoA. The protein operates within lipid metabolism; fatty acid biosynthesis. Catalyzes the condensation reaction of fatty acid synthesis by the addition to an acyl acceptor of two carbons from malonyl-ACP. Catalyzes the first condensation reaction which initiates fatty acid synthesis and may therefore play a role in governing the total rate of fatty acid production. Possesses both acetoacetyl-ACP synthase and acetyl transacylase activities. Its substrate specificity determines the biosynthesis of branched-chain and/or straight-chain of fatty acids. In Clostridium botulinum (strain ATCC 19397 / Type A), this protein is Beta-ketoacyl-[acyl-carrier-protein] synthase III.